Here is a 451-residue protein sequence, read N- to C-terminus: Cytosolic Fe-S cluster assembly factor NAR1 (451 aa).

Residues C20, C56, C59, C62, C166, C213, C382, and C386 each contribute to the [4Fe-4S] cluster site.

Belongs to the NARF family.

Its function is as follows. Component of the cytosolic Fe/S protein assembly machinery. Required for maturation of extramitochondrial Fe/S proteins. May play a role in the transfer of pre-assembled Fe/S clusters to target apoproteins. The chain is Cytosolic Fe-S cluster assembly factor NAR1 (NAR1) from Eremothecium gossypii (strain ATCC 10895 / CBS 109.51 / FGSC 9923 / NRRL Y-1056) (Yeast).